We begin with the raw amino-acid sequence, 270 residues long: tRNA pseudouridine synthase A (270 aa).

The active-site Nucleophile is the aspartate 51. Tyrosine 109 provides a ligand contact to substrate.

The protein belongs to the tRNA pseudouridine synthase TruA family. As to quaternary structure, homodimer.

The enzyme catalyses uridine(38/39/40) in tRNA = pseudouridine(38/39/40) in tRNA. In terms of biological role, formation of pseudouridine at positions 38, 39 and 40 in the anticodon stem and loop of transfer RNAs. This is tRNA pseudouridine synthase A from Variovorax paradoxus (strain S110).